The chain runs to 220 residues: Fructose-6-phosphate aldolase (220 aa).

Catalysis depends on Lys-85, which acts as the Schiff-base intermediate with substrate.

The protein belongs to the transaldolase family. Type 3A subfamily. In terms of assembly, homodecamer.

The protein resides in the cytoplasm. It catalyses the reaction beta-D-fructose 6-phosphate = dihydroxyacetone + D-glyceraldehyde 3-phosphate. Functionally, catalyzes the reversible formation of fructose 6-phosphate from dihydroxyacetone and D-glyceraldehyde 3-phosphate via an aldolization reaction. The protein is Fructose-6-phosphate aldolase of Enterobacter sp. (strain 638).